A 201-amino-acid polypeptide reads, in one-letter code: Akirin (201 aa).

Residues 1–133 (MACATLKRAL…PRRPDSPQNL (133 aa)) form a disordered region. Residues 20–25 (PKRRRC) carry the Nuclear localization signal motif. Residues serine 39 and serine 41 each carry the phosphoserine modification. Polar residues-rich tracts occupy residues 44-57 (GPST…TPSN) and 65-75 (EPSPFSESSLA). Residue serine 67 is modified to Phosphoserine. Residues 112–122 (SESSGSEMGPE) show a composition bias toward low complexity. Serine 123 and serine 129 each carry phosphoserine.

Belongs to the akirin family. Interacts with dmap1. Interacts with bap60 and rel; interaction is immune stimulation-dependent; activates selected rel target gene promoters. Interacts with bap55; interaction is immune stimulation-dependent. Interacts with twi. In terms of processing, polyubiquitinated via 'Lys-63'-linked ubiquitin by Hyd, promoting interaction with rel. Ubiquitous.

The protein resides in the nucleus. In terms of biological role, molecular adapter that acts as a bridge between a variety of multiprotein complexes, and which is required for embryonic development and for normal innate immune response. Acts as a regulator of embryonic myogenesis by bridging Twist (twi) with the SWI/SNF-like Brahma complex, promoting expression of twi-regulated genes during myogenesis. Effector of immune deficiency pathway (Imd) by acting either downstream of, or at the level of, the NF-kappa-B factor Relish (Rel). Acts by bridging the NF-kappa-B factor Rel and the Brahma complex through bap60 interaction, leading to activation a subset of NF-kappa-B factor Relish (Rel) effector genes. Not part of the Toll pathway. Required for the formation of the heart by promoting expression ot tinman (tin). This chain is Akirin, found in Drosophila melanogaster (Fruit fly).